A 353-amino-acid polypeptide reads, in one-letter code: E3 ubiquitin-protein ligase Os03g0188200 (353 aa).

A helical transmembrane segment spans residues 48–68 (VVVLVALITAFVLLTVFSVLI). Residues 133–175 (CAVCLAEFADSDELRVLPACCHVFHPDCIDPWLAAAVTCPLCR) form an RING-type; atypical zinc finger. Composition is skewed to basic and acidic residues over residues 308 to 318 (ADWDAGEEHGG) and 340 to 353 (GSKE…LNRV). The tract at residues 308 to 353 (ADWDAGEEHGGSKRVHPVAGAQDETPSGSGSDGSKENSDSDALNRV) is disordered.

The protein resides in the membrane. It catalyses the reaction S-ubiquitinyl-[E2 ubiquitin-conjugating enzyme]-L-cysteine + [acceptor protein]-L-lysine = [E2 ubiquitin-conjugating enzyme]-L-cysteine + N(6)-ubiquitinyl-[acceptor protein]-L-lysine.. The protein operates within protein modification; protein ubiquitination. Possesses E3 ubiquitin-protein ligase in vitro. The chain is E3 ubiquitin-protein ligase Os03g0188200 from Oryza sativa subsp. japonica (Rice).